The primary structure comprises 224 residues: Precorrin-2 dehydrogenase (224 aa).

Residues 26-27 (SV) and 47-50 (EFSQ) each bind NAD(+).

The protein belongs to the precorrin-2 dehydrogenase / sirohydrochlorin ferrochelatase family. In terms of assembly, homodimer.

It carries out the reaction precorrin-2 + NAD(+) = sirohydrochlorin + NADH + 2 H(+). It participates in porphyrin-containing compound metabolism; siroheme biosynthesis; sirohydrochlorin from precorrin-2: step 1/1. In terms of biological role, involved in the archaeal biosynthesis of heme. Catalyzes the oxiation of precorrin-2 into sirohydroclorin. This is Precorrin-2 dehydrogenase from Methanosarcina barkeri (strain Fusaro / DSM 804).